The following is a 69-amino-acid chain: Beta-defensin 11 (69 aa).

The signal sequence occupies residues 1-23; it reads MRTLCSLLLIGCLLFSYDTPVVG. Disulfide bonds link Cys35–Cys64, Cys42–Cys57, and Cys47–Cys65.

The protein belongs to the beta-defensin family.

It is found in the secreted. Its function is as follows. Has antibacterial activity. The polypeptide is Beta-defensin 11 (Defb11) (Rattus norvegicus (Rat)).